We begin with the raw amino-acid sequence, 375 residues long: Killer cell immunoglobulin-like receptor 2DL5A (375 aa).

The signal sequence occupies residues 1–21; the sequence is MSLMVISMACVGFFLLQGAWT. Residues 22–238 are Extracellular-facing; it reads HEGGQDKPLL…PSSKTGIRRH (217 aa). Ig-like C2-type domains are found at residues 42–102 and 137–200; these read GGHV…HPRS and GENV…LHDS. C49 and C95 are joined by a disulfide. N-linked (GlcNAc...) asparagine glycosylation is found at N139, N173, and N218. C144 and C193 are oxidised to a cystine. The interval 213–233 is disordered; sequence VSVTGNSSSSSSSPTEPSSKT. A compositionally biased stretch (low complexity) spans 219–231; it reads SSSSSSSPTEPSS. Residues 239–259 form a helical membrane-spanning segment; that stretch reads LHILIGTSVAIILFIILFFFL. Residues 260 to 375 lie on the Cytoplasmic side of the membrane; sequence LHCCCSNKKN…ASSHVPAAGI (116 aa). The segment at 334-375 is disordered; the sequence is AKPRSLSPAHKHHSQALRGSSRETTALSQNRVASSHVPAAGI. Polar residues predominate over residues 355–366; the sequence is RETTALSQNRVA.

This sequence belongs to the immunoglobulin superfamily.

The protein localises to the cell membrane. In terms of biological role, receptor on natural killer (NK) cells for HLA-C alleles. Inhibits the activity of NK cells thus preventing cell lysis. The sequence is that of Killer cell immunoglobulin-like receptor 2DL5A (KIR2DL5A) from Homo sapiens (Human).